We begin with the raw amino-acid sequence, 194 residues long: Holliday junction branch migration complex subunit RuvA (194 aa).

Positions 1-64 (MIGRLRGILA…EDSVSLYGFL (64 aa)) are domain I. Positions 65 to 140 (REGERRLFRD…RAADFSSGAP (76 aa)) are domain II. The flexible linker stretch occupies residues 140–144 (PITGQ). The interval 145–194 (LGPDAISEATVALQQLGYKPAEAARMARDAGAEGGEVATVIRKALQAALR) is domain III.

This sequence belongs to the RuvA family. Homotetramer. Forms an RuvA(8)-RuvB(12)-Holliday junction (HJ) complex. HJ DNA is sandwiched between 2 RuvA tetramers; dsDNA enters through RuvA and exits via RuvB. An RuvB hexamer assembles on each DNA strand where it exits the tetramer. Each RuvB hexamer is contacted by two RuvA subunits (via domain III) on 2 adjacent RuvB subunits; this complex drives branch migration. In the full resolvosome a probable DNA-RuvA(4)-RuvB(12)-RuvC(2) complex forms which resolves the HJ.

The protein resides in the cytoplasm. Functionally, the RuvA-RuvB-RuvC complex processes Holliday junction (HJ) DNA during genetic recombination and DNA repair, while the RuvA-RuvB complex plays an important role in the rescue of blocked DNA replication forks via replication fork reversal (RFR). RuvA specifically binds to HJ cruciform DNA, conferring on it an open structure. The RuvB hexamer acts as an ATP-dependent pump, pulling dsDNA into and through the RuvAB complex. HJ branch migration allows RuvC to scan DNA until it finds its consensus sequence, where it cleaves and resolves the cruciform DNA. This is Holliday junction branch migration complex subunit RuvA from Xanthomonas oryzae pv. oryzae (strain MAFF 311018).